The chain runs to 406 residues: Putative cyclin-F3-2 (406 aa).

The interval 1 to 107 is disordered; sequence MARPRTRSVA…PGAAGGPWQL (107 aa). Composition is skewed to low complexity over residues 11 to 21 and 29 to 57; these read RMEATAAAAAA and NPDG…NAGE.

Belongs to the cyclin family. Cyclin F subfamily.

This chain is Putative cyclin-F3-2 (CYCF3-2), found in Oryza sativa subsp. japonica (Rice).